Consider the following 120-residue polypeptide: Large ribosomal subunit protein bL19 (120 aa).

The protein belongs to the bacterial ribosomal protein bL19 family.

This protein is located at the 30S-50S ribosomal subunit interface and may play a role in the structure and function of the aminoacyl-tRNA binding site. The protein is Large ribosomal subunit protein bL19 of Chlorobium chlorochromatii (strain CaD3).